The primary structure comprises 329 residues: DNA-directed RNA polymerase subunit alpha (329 aa).

The tract at residues 1 to 235 (MQGSVTEFLK…EQLDAFVDLR (235 aa)) is alpha N-terminal domain (alpha-NTD). Positions 249 to 329 (FDPILLRPVD…NWPPASIAED (81 aa)) are alpha C-terminal domain (alpha-CTD).

It belongs to the RNA polymerase alpha chain family. Homodimer. The RNAP catalytic core consists of 2 alpha, 1 beta, 1 beta' and 1 omega subunit. When a sigma factor is associated with the core the holoenzyme is formed, which can initiate transcription.

It carries out the reaction RNA(n) + a ribonucleoside 5'-triphosphate = RNA(n+1) + diphosphate. DNA-dependent RNA polymerase catalyzes the transcription of DNA into RNA using the four ribonucleoside triphosphates as substrates. The sequence is that of DNA-directed RNA polymerase subunit alpha from Actinobacillus succinogenes (strain ATCC 55618 / DSM 22257 / CCUG 43843 / 130Z).